A 454-amino-acid polypeptide reads, in one-letter code: Tubulin alpha chain (454 aa).

The GTP site is built by Q12, D72, S141, G145, T146, T180, N207, and N229. Residue D72 participates in Mg(2+) binding. Residue E255 is part of the active site.

It belongs to the tubulin family. Dimer of alpha and beta chains. A typical microtubule is a hollow water-filled tube with an outer diameter of 25 nm and an inner diameter of 15 nM. Alpha-beta heterodimers associate head-to-tail to form protofilaments running lengthwise along the microtubule wall with the beta-tubulin subunit facing the microtubule plus end conferring a structural polarity. Microtubules usually have 13 protofilaments but different protofilament numbers can be found in some organisms and specialized cells. The cofactor is Mg(2+).

It is found in the cytoplasm. Its subcellular location is the cytoskeleton. It carries out the reaction GTP + H2O = GDP + phosphate + H(+). In terms of biological role, tubulin is the major constituent of microtubules, a cylinder consisting of laterally associated linear protofilaments composed of alpha- and beta-tubulin heterodimers. Microtubules grow by the addition of GTP-tubulin dimers to the microtubule end, where a stabilizing cap forms. Below the cap, tubulin dimers are in GDP-bound state, owing to GTPase activity of alpha-tubulin. The chain is Tubulin alpha chain (TUB1) from Colletotrichum orbiculare (strain 104-T / ATCC 96160 / CBS 514.97 / LARS 414 / MAFF 240422) (Cucumber anthracnose fungus).